Reading from the N-terminus, the 158-residue chain is uncharacterized protein (158 aa).

This is an uncharacterized protein from Saccharomyces cerevisiae (strain ATCC 204508 / S288c) (Baker's yeast).